The sequence spans 78 residues: Small ribosomal subunit protein bS18 (78 aa).

This sequence belongs to the bacterial ribosomal protein bS18 family. As to quaternary structure, part of the 30S ribosomal subunit. Forms a tight heterodimer with protein bS6.

Binds as a heterodimer with protein bS6 to the central domain of the 16S rRNA, where it helps stabilize the platform of the 30S subunit. This Geobacillus sp. (strain WCH70) protein is Small ribosomal subunit protein bS18.